The chain runs to 257 residues: 4-hydroxy-tetrahydrodipicolinate reductase (257 aa).

Residues 8 to 13 (GSTGRV), 90 to 92 (ATT), and 114 to 117 (ATNM) each bind NAD(+). The Proton donor/acceptor role is filled by His146. His147 serves as a coordination point for (S)-2,3,4,5-tetrahydrodipicolinate. Lys150 serves as the catalytic Proton donor. 156–157 (GT) contacts (S)-2,3,4,5-tetrahydrodipicolinate.

It belongs to the DapB family.

Its subcellular location is the cytoplasm. The catalysed reaction is (S)-2,3,4,5-tetrahydrodipicolinate + NAD(+) + H2O = (2S,4S)-4-hydroxy-2,3,4,5-tetrahydrodipicolinate + NADH + H(+). The enzyme catalyses (S)-2,3,4,5-tetrahydrodipicolinate + NADP(+) + H2O = (2S,4S)-4-hydroxy-2,3,4,5-tetrahydrodipicolinate + NADPH + H(+). It functions in the pathway amino-acid biosynthesis; L-lysine biosynthesis via DAP pathway; (S)-tetrahydrodipicolinate from L-aspartate: step 4/4. Functionally, catalyzes the conversion of 4-hydroxy-tetrahydrodipicolinate (HTPA) to tetrahydrodipicolinate. This is 4-hydroxy-tetrahydrodipicolinate reductase from Aliarcobacter butzleri (strain RM4018) (Arcobacter butzleri).